The sequence spans 369 residues: Cytochrome P450 monooxygenase apf8 (369 aa).

Cysteine 303 is a heme binding site.

It belongs to the cytochrome P450 family. The cofactor is heme.

It participates in secondary metabolite biosynthesis. Its function is as follows. Cytochrome P450 monooxygenase; part of the gene cluster that mediates the biosynthesis of the cyclic tetrapeptide apicidin F (APF). The non-ribosomal peptide synthetase apf1 incorporates four different amino acids to produce apicidin F: L-phenylalanine, D-pipecolic acid (D-pip), N-methoxy-L-tryptophan and L-2-aminooctanedioic acid. L-Phenylalanine is the only proteinogenic amino acid directly used by apf1. The 3 other apf1 substrates are non-proteinogenic and have to be modified by other enzymes of the cluster. Lysine is converted to delta-1-pyrroline-5-carboxylate (P5C) which is reduced to L-pipecolic acid (L-pip) by apf3. L-pip is epimerized to D-pip, probably by apf1 activity, prior to incorporation. L-Tryptophan is N-oxidyzed by one of the cytochrome P450 monooxygenases (apf7 or apf8), and further methylated at the hydroxy group by the O-methyltransferase apf6 to yield N-methoxy-L-tryptophan. The synthesis of the fourth apf1 substrate is more complex. The fatty acid synthase apf5 is involved in the synthesis of the octanoic acid backbone of L-2-aminooctanedioic acid by fixing one acetyl-CoA unit and three malonyl-CoA units. Then one of the cytochrome P450 monooxygenases (apf7 or apf8) may oxidize this backbone to 2-oxooctanoic acid. The aminotransferase apf4 is predicted to catalyze the exchange of the keto group with an amino group. The next step would be the oxidation of 2-aminooctanoic acid by one of the cytochrome P450 monooxygenases (apf7 or apf8). The last step is the oxidation of 2-amino-8-hydroxyoctanoic acid to 2-aminooctanedioic acid is catalyzed by the FAD-dependent monooxygenase apf9. The polypeptide is Cytochrome P450 monooxygenase apf8 (Gibberella fujikuroi (strain CBS 195.34 / IMI 58289 / NRRL A-6831) (Bakanae and foot rot disease fungus)).